The sequence spans 76 residues: uncharacterized protein (76 aa).

Residues 27 to 76 are disordered; the sequence is SINNGEGSSVVHRDATAPPTPPVVPTSTLQVPGLQRARTPEPNDPRVANL.

This is an uncharacterized protein from Caenorhabditis elegans.